The primary structure comprises 184 residues: Bifunctional protein PyrR (184 aa).

The short motif at V105–T117 is the PRPP-binding element.

The protein belongs to the purine/pyrimidine phosphoribosyltransferase family. PyrR subfamily.

The enzyme catalyses UMP + diphosphate = 5-phospho-alpha-D-ribose 1-diphosphate + uracil. Its function is as follows. Regulates the transcription of the pyrimidine nucleotide (pyr) operon in response to exogenous pyrimidines. Also displays a weak uracil phosphoribosyltransferase activity which is not physiologically significant. In Rubrobacter xylanophilus (strain DSM 9941 / JCM 11954 / NBRC 16129 / PRD-1), this protein is Bifunctional protein PyrR.